The primary structure comprises 344 residues: N-acetyl-gamma-glutamyl-phosphate reductase (344 aa).

Cysteine 148 is a catalytic residue.

The protein belongs to the NAGSA dehydrogenase family. Type 1 subfamily.

The protein localises to the cytoplasm. It catalyses the reaction N-acetyl-L-glutamate 5-semialdehyde + phosphate + NADP(+) = N-acetyl-L-glutamyl 5-phosphate + NADPH + H(+). Its pathway is amino-acid biosynthesis; L-arginine biosynthesis; N(2)-acetyl-L-ornithine from L-glutamate: step 3/4. Catalyzes the NADPH-dependent reduction of N-acetyl-5-glutamyl phosphate to yield N-acetyl-L-glutamate 5-semialdehyde. The protein is N-acetyl-gamma-glutamyl-phosphate reductase of Clostridium botulinum (strain Eklund 17B / Type B).